A 100-amino-acid polypeptide reads, in one-letter code: Large ribosomal subunit protein uL23 (100 aa).

This sequence belongs to the universal ribosomal protein uL23 family. As to quaternary structure, part of the 50S ribosomal subunit. Contacts protein L29, and trigger factor when it is bound to the ribosome.

Functionally, one of the early assembly proteins it binds 23S rRNA. One of the proteins that surrounds the polypeptide exit tunnel on the outside of the ribosome. Forms the main docking site for trigger factor binding to the ribosome. This chain is Large ribosomal subunit protein uL23, found in Aggregatibacter actinomycetemcomitans (Actinobacillus actinomycetemcomitans).